Consider the following 203-residue polypeptide: Urease accessory protein UreE (203 aa).

Residues 170–190 (EHHGHSHSRSHDHDHDHDHQH) show a composition bias toward basic and acidic residues. The tract at residues 170-203 (EHHGHSHSRSHDHDHDHDHQHGPSCSHGHHHGHR) is disordered.

This sequence belongs to the UreE family.

The protein resides in the cytoplasm. Functionally, involved in urease metallocenter assembly. Binds nickel. Probably functions as a nickel donor during metallocenter assembly. The protein is Urease accessory protein UreE of Burkholderia pseudomallei (strain 1710b).